The following is a 388-amino-acid chain: Methylthioribose-1-phosphate isomerase (388 aa).

Catalysis depends on D253, which acts as the Proton donor.

It belongs to the eIF-2B alpha/beta/delta subunits family. MtnA subfamily.

Its subcellular location is the cytoplasm. It localises to the nucleus. The enzyme catalyses 5-(methylsulfanyl)-alpha-D-ribose 1-phosphate = 5-(methylsulfanyl)-D-ribulose 1-phosphate. The protein operates within amino-acid biosynthesis; L-methionine biosynthesis via salvage pathway; L-methionine from S-methyl-5-thio-alpha-D-ribose 1-phosphate: step 1/6. Catalyzes the interconversion of methylthioribose-1-phosphate (MTR-1-P) into methylthioribulose-1-phosphate (MTRu-1-P). The chain is Methylthioribose-1-phosphate isomerase from Fusarium vanettenii (strain ATCC MYA-4622 / CBS 123669 / FGSC 9596 / NRRL 45880 / 77-13-4) (Fusarium solani subsp. pisi).